The primary structure comprises 872 residues: DNA mismatch repair protein MutS (872 aa).

Residue 626-633 coordinates ATP; the sequence is GPNMAGKS.

It belongs to the DNA mismatch repair MutS family.

In terms of biological role, this protein is involved in the repair of mismatches in DNA. It is possible that it carries out the mismatch recognition step. This protein has a weak ATPase activity. This is DNA mismatch repair protein MutS from Chlorobium phaeobacteroides (strain DSM 266 / SMG 266 / 2430).